The sequence spans 728 residues: Catalase-peroxidase (728 aa).

A cross-link (tryptophyl-tyrosyl-methioninium (Trp-Tyr) (with M-251)) is located at residues 97–225; sequence WHSAGTYRIA…LAAVMMGLIY (129 aa). The active-site Proton acceptor is the His98. A cross-link (tryptophyl-tyrosyl-methioninium (Tyr-Met) (with W-97)) is located at residues 225–251; it reads YVNPEGVDGNPDPLRTAQDIRITFARM. Position 266 (His266) interacts with heme b.

The protein belongs to the peroxidase family. Peroxidase/catalase subfamily. As to quaternary structure, homodimer or homotetramer. It depends on heme b as a cofactor. Post-translationally, formation of the three residue Trp-Tyr-Met cross-link is important for the catalase, but not the peroxidase activity of the enzyme.

It catalyses the reaction H2O2 + AH2 = A + 2 H2O. It carries out the reaction 2 H2O2 = O2 + 2 H2O. Functionally, bifunctional enzyme with both catalase and broad-spectrum peroxidase activity. The protein is Catalase-peroxidase of Shewanella putrefaciens (strain CN-32 / ATCC BAA-453).